The primary structure comprises 330 residues: Polyprenal reductase (330 aa).

At 1–16 (MAGWAGFELSALNPLR) the chain is on the cytoplasmic side. A helical transmembrane segment spans residues 17-37 (TLWLALAAAFLFALLLQLAPA). Residues 38-80 (RLLPSCALFQDLLRYGKTKQSGSRRPAVCRAFDVPKRYFSHFY) are Lumenal-facing. Residues 81–101 (VISVVWNGSLLWLLSQSLFLG) traverse the membrane as a helical segment. Residues 102–132 (APFPNWLSALLRTLGATQFQALEMESKASRM) lie on the Cytoplasmic side of the membrane. A helical membrane pass occupies residues 133–153 (PAAELALSAFLVLVFLWVHSL). At 154-169 (RRLFECFYVSVFSNAA) the chain is on the lumenal side. Residues 170–190 (IHVVQYCFGLVYYVLVGLTVL) form a helical membrane-spanning segment. Over 191–206 (SQVPMDDKNVYVLGKN) the chain is Cytoplasmic. Residues 207–227 (LLIQARWFHILGMVMFFWSSA) traverse the membrane as a helical segment. The Lumenal segment spans residues 228-277 (HQYKCHVILSNLRRNKKGVVIHCQHRIPFGDWFEYVSSANYLAELMIYIS). A helical transmembrane segment spans residues 278–298 (MAVTFGLHNLTWWLVVTYVFS). Residues 299 to 330 (SQALSAFFNHKFYRSTFVSYPKHRKAFLPFLF) are Cytoplasmic-facing.

This sequence belongs to the steroid 5-alpha reductase family. Polyprenal reductase subfamily.

It localises to the endoplasmic reticulum membrane. The catalysed reaction is a di-trans,poly-cis-dolichal + NADP(+) = a di-trans,poly-cis-polyprenal + NADPH + H(+). It carries out the reaction a 3-oxo-5alpha-steroid + NADP(+) = a 3-oxo-Delta(4)-steroid + NADPH + H(+). It catalyses the reaction androst-4-ene-3,17-dione + NADPH + H(+) = 5alpha-androstan-3,17-dione + NADP(+). The enzyme catalyses 17beta-hydroxy-5alpha-androstan-3-one + NADP(+) = testosterone + NADPH + H(+). Its pathway is protein modification; protein glycosylation. Plays a key role in early steps of protein N-linked glycosylation by being involved in the conversion of polyprenol into dolichol. Acts as a polyprenal reductase that mediates the reduction of polyprenal into dolichal in a NADP-dependent mechanism. Dolichols are required for the synthesis of dolichol-linked monosaccharides and the oligosaccharide precursor used for N-glycosylation. Also able to convert testosterone (T) into 5-alpha-dihydrotestosterone (DHT). The protein is Polyprenal reductase of Mus musculus (Mouse).